The primary structure comprises 549 residues: Chaperonin GroEL 5 (549 aa).

ATP contacts are provided by residues 30–33 (TLGP), K51, 87–91 (DGTTT), G415, and D495.

Belongs to the chaperonin (HSP60) family. Forms a cylinder of 14 subunits composed of two heptameric rings stacked back-to-back. Interacts with the co-chaperonin GroES.

The protein localises to the cytoplasm. The enzyme catalyses ATP + H2O + a folded polypeptide = ADP + phosphate + an unfolded polypeptide.. Together with its co-chaperonin GroES, plays an essential role in assisting protein folding. The GroEL-GroES system forms a nano-cage that allows encapsulation of the non-native substrate proteins and provides a physical environment optimized to promote and accelerate protein folding. The polypeptide is Chaperonin GroEL 5 (Mesorhizobium japonicum (strain LMG 29417 / CECT 9101 / MAFF 303099) (Mesorhizobium loti (strain MAFF 303099))).